The primary structure comprises 183 residues: UPF0098 protein YbcL (183 aa).

The first 21 residues, 1–21 (MKTLIVSTVLAFITFSAQAAA), serve as a signal peptide directing secretion. Cys-46 and Cys-129 are oxidised to a cystine.

The protein belongs to the UPF0098 family. Homodimer.

It localises to the periplasm. This chain is UPF0098 protein YbcL (ybcL), found in Escherichia coli (strain K12).